The sequence spans 655 residues: T-lymphocyte surface antigen Ly-9 (655 aa).

The first 47 residues, 1–47 (MVAPKSHTDDWAPGPFSSKPQRSQLQIFSSVLQTSLLFLLMGLRASG), serve as a signal peptide directing secretion. The 111-residue stretch at 48 to 158 (KDSAPTVVSG…FVYEQLQEPQ (111 aa)) folds into the Ig-like V-type 1 domain. The Extracellular segment spans residues 48-454 (KDSAPTVVSG…ICSGPERNTK (407 aa)). Residues Asn68, Asn95, Asn120, Asn169, and Asn173 are each glycosylated (N-linked (GlcNAc...) asparagine). In terms of domain architecture, Ig-like C2-type 1 spans 159–235 (VTMKSVKVSE…NPVSQRSSLP (77 aa)). 2 cysteine pairs are disulfide-bonded: Cys172–Cys242 and Cys178–Cys222. One can recognise an Ig-like V-type 2 domain in the interval 251 to 363 (GTTGETVVGV…LLIYRRLRKP (113 aa)). N-linked (GlcNAc...) asparagine glycosylation is found at Asn285, Asn413, and Asn424. The Ig-like C2-type 2 domain occupies 364–452 (KITWSLRHSE…ENICSGPERN (89 aa)). Cystine bridges form between Cys377–Cys446 and Cys383–Cys427. Residues 455–476 (LWIGLFLMVCLLCVGIFSWCIW) form a helical membrane-spanning segment. Over 477–655 (KRKGRCSVPA…PESPTYENFT (179 aa)) the chain is Cytoplasmic. The interval 521-556 (PLRPARQQPTPTSDSSSDSNLTTEEDEDRPEVHKPI) is disordered. The span at 530-542 (TPTSDSSSDSNLT) shows a compositional bias: low complexity. 2 short sequence motifs (ITSM) span residues 601–606 (TMYAQV) and 624–629 (TIYCSI). Position 603 is a phosphotyrosine (Tyr603). Residues 633-655 (QVVPPPQQNDLEIPESPTYENFT) form a disordered region.

As to quaternary structure, interacts with SH2D1A, SH2D1B and INPP5D. Interacts (via phosphorylated cytoplasmic domain) with PTPN11; the interaction is blocked by SH2D1A. Increased surface expression on T-cells of systemic lupus erythematosus (SLE) patients.

The protein localises to the membrane. It is found in the cell membrane. Its function is as follows. Self-ligand receptor of the signaling lymphocytic activation molecule (SLAM) family. SLAM receptors triggered by homo- or heterotypic cell-cell interactions are modulating the activation and differentiation of a wide variety of immune cells and thus are involved in the regulation and interconnection of both innate and adaptive immune response. Activities are controlled by presence or absence of small cytoplasmic adapter proteins, SH2D1A/SAP and/or SH2D1B/EAT-2. May participate in adhesion reactions between T lymphocytes and accessory cells by homophilic interaction. Promotes T-cell differentiation into a helper T-cell Th17 phenotype leading to increased IL-17 secretion; the costimulatory activity requires SH2D1A. Promotes recruitment of RORC to the IL-17 promoter. May be involved in the maintenance of peripheral cell tolerance by serving as a negative regulator of the immune response. May disable autoantibody responses and inhibit IFN-gamma secretion by CD4(+) T-cells. May negatively regulate the size of thymic innate CD8(+) T-cells and the development of invariant natural killer T (iNKT) cells. This chain is T-lymphocyte surface antigen Ly-9 (LY9), found in Homo sapiens (Human).